The primary structure comprises 181 residues: MPFPLPLNFPKWLSENEHLLQPPVGNFCLFRTRDYTVMAVGGPNARSDYHYQPTEEFFYQYKGDMLLKVIDEDGKFQDIPIKQGEMFMLPAHTPHSPVRFANTVGIVVERTRPDGSPDAMRWYCPNKEAHGETPTLVKEVHFQCTDLGTQLKPIIDAWVNDEAGRQCSHCGYTQGARELPA.

R46 is an O2 binding site. Fe cation-binding residues include H50, E56, and H95. E56 provides a ligand contact to substrate. Substrate contacts are provided by R99 and E109.

Belongs to the 3-HAO family. Fe(2+) is required as a cofactor.

The protein resides in the cytoplasm. The catalysed reaction is 3-hydroxyanthranilate + O2 = (2Z,4Z)-2-amino-3-carboxymuconate 6-semialdehyde. It participates in cofactor biosynthesis; NAD(+) biosynthesis; quinolinate from L-kynurenine: step 3/3. In terms of biological role, catalyzes the oxidative ring opening of 3-hydroxyanthranilate to 2-amino-3-carboxymuconate semialdehyde, which spontaneously cyclizes to quinolinate. This is 3-hydroxyanthranilate 3,4-dioxygenase from Mycosarcoma maydis (Corn smut fungus).